A 130-amino-acid chain; its full sequence is Small ribosomal subunit protein uS9 (130 aa).

It belongs to the universal ribosomal protein uS9 family.

The sequence is that of Small ribosomal subunit protein uS9 from Ralstonia nicotianae (strain ATCC BAA-1114 / GMI1000) (Ralstonia solanacearum).